Reading from the N-terminus, the 67-residue chain is DNA-directed RNA polymerase subunit omega (67 aa).

It belongs to the RNA polymerase subunit omega family. As to quaternary structure, the RNAP catalytic core consists of 2 alpha, 1 beta, 1 beta' and 1 omega subunit. When a sigma factor is associated with the core the holoenzyme is formed, which can initiate transcription.

It carries out the reaction RNA(n) + a ribonucleoside 5'-triphosphate = RNA(n+1) + diphosphate. Its function is as follows. Promotes RNA polymerase assembly. Latches the N- and C-terminal regions of the beta' subunit thereby facilitating its interaction with the beta and alpha subunits. This Listeria monocytogenes serotype 4a (strain HCC23) protein is DNA-directed RNA polymerase subunit omega.